Here is a 381-residue protein sequence, read N- to C-terminus: Fe-S cluster assembly protein DRE2 (381 aa).

Positions 8–165 (AQGSGRFLLL…KPDFGAQQAV (158 aa)) are N-terminal SAM-like domain. The disordered stretch occupies residues 100–134 (RNRDNQIWGSGSDSAAGLGSSDGDGGGGEKMSSSE). Residues 108 to 118 (GSGSDSAAGLG) are compositionally biased toward low complexity. Residues 119–128 (SSDGDGGGGE) show a composition bias toward gly residues. Residues 166-273 (PLKLGRKKNL…EEELLGEYDM (108 aa)) form a linker region. [2Fe-2S] cluster contacts are provided by C283, C294, C297, and C299. The interval 283 to 299 (CRPKAGKRRRACKDCTC) is fe-S binding site A. Positions 344, 347, 355, and 358 each coordinate [4Fe-4S] cluster. 2 short sequence motifs (cx2C motif) span residues 344–347 (CGNC) and 355–358 (CDGC). The fe-S binding site B stretch occupies residues 344–358 (CGNCALGDAFRCDGC).

Belongs to the anamorsin family. Monomer. Interacts with TAH18. Interacts with MIA40. [2Fe-2S] cluster serves as cofactor. It depends on [4Fe-4S] cluster as a cofactor.

Its subcellular location is the cytoplasm. The protein localises to the mitochondrion intermembrane space. In terms of biological role, component of the cytosolic iron-sulfur (Fe-S) protein assembly (CIA) machinery required for the maturation of extramitochondrial Fe-S proteins. Part of an electron transfer chain functioning in an early step of cytosolic Fe-S biogenesis, facilitating the de novo assembly of a [4Fe-4S] cluster on the scaffold complex CFD1-NBP35. Electrons are transferred to DRE2 from NADPH via the FAD- and FMN-containing protein TAH18. TAH18-DRE2 are also required for the assembly of the diferric tyrosyl radical cofactor of ribonucleotide reductase (RNR), probably by providing electrons for reduction during radical cofactor maturation in the catalytic small subunit RNR2. This chain is Fe-S cluster assembly protein DRE2, found in Paracoccidioides brasiliensis (strain Pb18).